A 53-amino-acid chain; its full sequence is UPF0391 membrane protein Acid_3618 (53 aa).

The next 2 helical transmembrane spans lie at 6–26 (LVFL…LAGA) and 28–48 (VGIA…AFLM).

It belongs to the UPF0391 family.

The protein resides in the cell membrane. The sequence is that of UPF0391 membrane protein Acid_3618 from Solibacter usitatus (strain Ellin6076).